The chain runs to 377 residues: Cytochrome c peroxidase, mitochondrial (377 aa).

A mitochondrion-targeting transit peptide spans 1-32; the sequence is MSFRAPNLIRSTVGRRAGQTLNLRSQVIRRRF. His-138 (proton acceptor) is an active-site residue. His-261 contacts heme b. Residue Trp-277 is the Tryptophan radical intermediate of the active site.

Belongs to the peroxidase family. Cytochrome c peroxidase subfamily. Forms a one-to-one complex with cytochrome c. Interacts with MID1 (via C-terminus); the interaction may contribute to cellular detoxification of radicals. Heme b is required as a cofactor.

Its subcellular location is the mitochondrion matrix. The protein resides in the mitochondrion intermembrane space. It carries out the reaction 2 Fe(II)-[cytochrome c] + H2O2 + 2 H(+) = 2 Fe(III)-[cytochrome c] + 2 H2O. Destroys radicals which are normally produced within the cells and which are toxic to biological systems. This is Cytochrome c peroxidase, mitochondrial (CCP1) from Cryptococcus neoformans var. grubii serotype A (strain H99 / ATCC 208821 / CBS 10515 / FGSC 9487) (Filobasidiella neoformans var. grubii).